We begin with the raw amino-acid sequence, 1379 residues long: DNA-directed RNA polymerase subunit beta'' (1379 aa).

4 residues coordinate Zn(2+): C220, C293, C300, and C303.

Belongs to the RNA polymerase beta' chain family. RpoC2 subfamily. In terms of assembly, in plastids the minimal PEP RNA polymerase catalytic core is composed of four subunits: alpha, beta, beta', and beta''. When a (nuclear-encoded) sigma factor is associated with the core the holoenzyme is formed, which can initiate transcription. It depends on Zn(2+) as a cofactor.

It localises to the plastid. The protein resides in the chloroplast. The enzyme catalyses RNA(n) + a ribonucleoside 5'-triphosphate = RNA(n+1) + diphosphate. Its function is as follows. DNA-dependent RNA polymerase catalyzes the transcription of DNA into RNA using the four ribonucleoside triphosphates as substrates. This Nasturtium officinale (Watercress) protein is DNA-directed RNA polymerase subunit beta''.